The following is a 1362-amino-acid chain: DNA-directed RNA polymerase subunit beta'' (1362 aa).

4 residues coordinate Zn(2+): Cys-224, Cys-295, Cys-302, and Cys-305.

It belongs to the RNA polymerase beta' chain family. RpoC2 subfamily. In terms of assembly, in plastids the minimal PEP RNA polymerase catalytic core is composed of four subunits: alpha, beta, beta', and beta''. When a (nuclear-encoded) sigma factor is associated with the core the holoenzyme is formed, which can initiate transcription. Zn(2+) is required as a cofactor.

It localises to the plastid. The protein localises to the chloroplast. It carries out the reaction RNA(n) + a ribonucleoside 5'-triphosphate = RNA(n+1) + diphosphate. Its function is as follows. DNA-dependent RNA polymerase catalyzes the transcription of DNA into RNA using the four ribonucleoside triphosphates as substrates. The polypeptide is DNA-directed RNA polymerase subunit beta'' (Helianthus annuus (Common sunflower)).